Here is a 334-residue protein sequence, read N- to C-terminus: N-acetyl-gamma-glutamyl-phosphate reductase (334 aa).

Cysteine 154 is a catalytic residue.

It belongs to the NAGSA dehydrogenase family. Type 1 subfamily.

Its subcellular location is the cytoplasm. The catalysed reaction is N-acetyl-L-glutamate 5-semialdehyde + phosphate + NADP(+) = N-acetyl-L-glutamyl 5-phosphate + NADPH + H(+). Its pathway is amino-acid biosynthesis; L-arginine biosynthesis; N(2)-acetyl-L-ornithine from L-glutamate: step 3/4. Its function is as follows. Catalyzes the NADPH-dependent reduction of N-acetyl-5-glutamyl phosphate to yield N-acetyl-L-glutamate 5-semialdehyde. This chain is N-acetyl-gamma-glutamyl-phosphate reductase, found in Yersinia pseudotuberculosis serotype I (strain IP32953).